The sequence spans 476 residues: ATP synthase subunit beta (476 aa).

152 to 159 (GGAGVGKT) contacts ATP.

Belongs to the ATPase alpha/beta chains family. As to quaternary structure, F-type ATPases have 2 components, CF(1) - the catalytic core - and CF(0) - the membrane proton channel. CF(1) has five subunits: alpha(3), beta(3), gamma(1), delta(1), epsilon(1). CF(0) has three main subunits: a(1), b(2) and c(9-12). The alpha and beta chains form an alternating ring which encloses part of the gamma chain. CF(1) is attached to CF(0) by a central stalk formed by the gamma and epsilon chains, while a peripheral stalk is formed by the delta and b chains.

Its subcellular location is the cell inner membrane. The catalysed reaction is ATP + H2O + 4 H(+)(in) = ADP + phosphate + 5 H(+)(out). Functionally, produces ATP from ADP in the presence of a proton gradient across the membrane. The catalytic sites are hosted primarily by the beta subunits. This chain is ATP synthase subunit beta, found in Acidiphilium cryptum (strain JF-5).